Reading from the N-terminus, the 173-residue chain is Crossover junction endodeoxyribonuclease RuvC (173 aa).

Active-site residues include Asp8, Glu67, and Asp139. Mg(2+) is bound by residues Asp8, Glu67, and Asp139.

This sequence belongs to the RuvC family. Homodimer which binds Holliday junction (HJ) DNA. The HJ becomes 2-fold symmetrical on binding to RuvC with unstacked arms; it has a different conformation from HJ DNA in complex with RuvA. In the full resolvosome a probable DNA-RuvA(4)-RuvB(12)-RuvC(2) complex forms which resolves the HJ. Requires Mg(2+) as cofactor.

The protein localises to the cytoplasm. It catalyses the reaction Endonucleolytic cleavage at a junction such as a reciprocal single-stranded crossover between two homologous DNA duplexes (Holliday junction).. Its function is as follows. The RuvA-RuvB-RuvC complex processes Holliday junction (HJ) DNA during genetic recombination and DNA repair. Endonuclease that resolves HJ intermediates. Cleaves cruciform DNA by making single-stranded nicks across the HJ at symmetrical positions within the homologous arms, yielding a 5'-phosphate and a 3'-hydroxyl group; requires a central core of homology in the junction. The consensus cleavage sequence is 5'-(A/T)TT(C/G)-3'. Cleavage occurs on the 3'-side of the TT dinucleotide at the point of strand exchange. HJ branch migration catalyzed by RuvA-RuvB allows RuvC to scan DNA until it finds its consensus sequence, where it cleaves and resolves the cruciform DNA. This is Crossover junction endodeoxyribonuclease RuvC from Yersinia pseudotuberculosis serotype O:1b (strain IP 31758).